The chain runs to 695 residues: L-type lectin-domain containing receptor kinase S.7 (695 aa).

The N-terminal stretch at 1–23 (MPPRCRRLPLLFILLLAVRPLSA) is a signal peptide. The Extracellular segment spans residues 24-331 (AAASSIAAAP…NHRRRHLFYK (308 aa)). A legume-lectin like region spans residues 37-276 (YRRISWASNL…VERWTFRTFG (240 aa)). 2 N-linked (GlcNAc...) asparagine glycosylation sites follow: Asn45 and Asn279. A compositionally biased stretch (pro residues) spans 286 to 320 (PTKYIGPMPPNNQPLPPPPSPSPSPPPPSPPPPPH). The disordered stretch occupies residues 286-323 (PTKYIGPMPPNNQPLPPPPSPSPSPPPPSPPPPPHPNH). Residues 332–352 (VLGGVLGGMVLLGLVVVGSAV) form a helical membrane-spanning segment. Over 353 to 695 (LLGRSVRRKN…TANTAFFSCR (343 aa)) the chain is Cytoplasmic. Thr376 is subject to Phosphothreonine. Ser378 is subject to Phosphoserine. 2 positions are modified to phosphothreonine: Thr386 and Thr403. The region spanning 389–661 (FDSGNVIGVG…SMLDGTAPLI (273 aa)) is the Protein kinase domain. Residues 395-403 (IGVGGSGAT) and Lys418 each bind ATP. The active-site Proton acceptor is Asp514. A Phosphothreonine modification is found at Thr657.

This sequence in the N-terminal section; belongs to the leguminous lectin family. In the C-terminal section; belongs to the protein kinase superfamily. Ser/Thr protein kinase family. In terms of assembly, interacts with INP1. Interaction with INP1 is required for DAF1 polar localization at the future aperture sites in tetrads. Post-translationally, autophosphorylated at Thr-376; Ser-378; Thr-386; Thr-403 and Thr-657. As to expression, expressed in roots, leaves, lemma, palea, pistil and anthers.

It localises to the cell membrane. The protein localises to the cytoplasm. Its subcellular location is the cytosol. The catalysed reaction is L-seryl-[protein] + ATP = O-phospho-L-seryl-[protein] + ADP + H(+). The enzyme catalyses L-threonyl-[protein] + ATP = O-phospho-L-threonyl-[protein] + ADP + H(+). In terms of biological role, legume-lectin receptor-like kinase required for normal pollen development and male fertility. Regulates pollen exine assembly and aperture development. Plays a critical role in annulus formation, and may participate in the formation of the fibrillar-granular layer underneath the operculum. May function by regulating the expression of genes involved in pollen exine development. Kinase activity is required for its function in pollen development. The sequence is that of L-type lectin-domain containing receptor kinase S.7 from Oryza sativa subsp. japonica (Rice).